The sequence spans 609 residues: Chaperone protein DnaK (609 aa).

Thr172 bears the Phosphothreonine; by autocatalysis mark. Residues 578–609 (QAQAQQQAGAGGAAKKDENVVDAEFEEVKDDK) form a disordered region. The span at 597-609 (VVDAEFEEVKDDK) shows a compositional bias: acidic residues.

This sequence belongs to the heat shock protein 70 family.

Acts as a chaperone. The polypeptide is Chaperone protein DnaK (Geobacillus sp. (strain WCH70)).